Here is a 393-residue protein sequence, read N- to C-terminus: Translation initiation factor eIF2B subunit beta (393 aa).

Residues 105–125 (VSSSNSSSPSQKRDIPSNEKL) form a disordered region. Phosphoserine occurs at positions 106, 108, and 112.

It belongs to the eIF-2B alpha/beta/delta subunits family. In terms of assembly, component of the translation initiation factor 2B (eIF2B) complex which is a heterodecamer of two sets of five different subunits: alpha, beta, gamma, delta and epsilon. Subunits alpha, beta and delta comprise a regulatory subcomplex and subunits epsilon and gamma comprise a catalytic subcomplex. Within the complex, the hexameric regulatory complex resides at the center, with the two heterodimeric catalytic subcomplexes bound on opposite sides.

Its subcellular location is the cytoplasm. The protein localises to the cytosol. Functionally, acts as a component of the translation initiation factor 2B (eIF2B) complex, which catalyzes the exchange of GDP for GTP on the eukaryotic initiation factor 2 (eIF2) complex gamma subunit. Its guanine nucleotide exchange factor activity is repressed when bound to eIF2 complex phosphorylated on the alpha subunit, thereby limiting the amount of methionyl-initiator methionine tRNA available to the ribosome and consequently global translation is repressed. The protein is Translation initiation factor eIF2B subunit beta (tif222) of Schizosaccharomyces pombe (strain 972 / ATCC 24843) (Fission yeast).